We begin with the raw amino-acid sequence, 121 residues long: Snaclec coagulation factor IX-binding protein subunit A (121 aa).

Positions 1–120 (YEGHCYQTFK…CGERNPFVCE (120 aa)) constitute a C-type lectin domain. 2 cysteine pairs are disulfide-bonded: cysteine 22-cysteine 119 and cysteine 94-cysteine 111. 3 residues coordinate Ca(2+): serine 33, glutamate 35, and glutamate 39. Residue glutamate 120 participates in Ca(2+) binding.

This sequence belongs to the snaclec family. Heterodimer of subunits A and B; disulfide-linked. Expressed by the venom gland.

The protein resides in the secreted. In terms of biological role, anticoagulant protein which binds to the gamma-carboxyglutamic acid-domain regions of factor IX (F9) (but not factor X) in the presence of calcium with a 1 to 1 stoichiometry. The sequence is that of Snaclec coagulation factor IX-binding protein subunit A from Gloydius halys (Chinese water mocassin).